Here is a 64-residue protein sequence, read N- to C-terminus: MAKSKGARIIITLECTECRTNSDKRSAGVSRYTSTKNRRNTTNRLELKKFCTHCNKHTVHKEIK.

The protein belongs to the bacterial ribosomal protein bL33 family.

The protein is Large ribosomal subunit protein bL33 of Nostoc punctiforme (strain ATCC 29133 / PCC 73102).